The sequence spans 258 residues: UBX domain-containing protein 2A (258 aa).

Over residues 1-14 (MKEVDNLDSIKEEW) the composition is skewed to basic and acidic residues. Residues 1-30 (MKEVDNLDSIKEEWACETGPPDSQPLNDNQ) form a disordered region. Positions 1–152 (MKEVDNLDSI…SATPRIVSKA (152 aa)) are required for interaction with CHRNA3. Positions 1 to 165 (MKEVDNLDSI…EVDNKSTLSA (165 aa)) are required for inhibition of CHRNA3 ubiquitination and translocation of CHRNA3 to the plasma membrane resulting in an increase in acetylcholine-gated nicotinic acetylcholine receptor currents. The 65-residue stretch at 61–125 (QVDVNIKLWK…VEDKKNEVCM (65 aa)) folds into the SEP domain. A required for interaction with VCP region spans residues 168 to 258 (LNNLEPITRI…QKTAEPFRKL (91 aa)). The UBX domain maps to 170–247 (NLEPITRIQI…DLKNAVIIQR (78 aa)).

As to quaternary structure, part of a complex composed of STUB1/CHIP, VCP/p97, CHRNA3, and UBXN2A that modulates the ubiquitination and endoplasmic reticulum-associated degradation (ERAD) of CHRNA3. Within the complex UBXN2A acts as a scaffold protein required for the interaction of CHRNA3 with VCP/p97, this interaction also inhibits CHRNA3 ubiquitination by STUB1/CHIP and subsequently ERAD. Interacts (via SEP domain) with CHRNA3 and interacts (via UBX domain) with VCP/P97; these interactions are required for the interaction of CHRNA3 with the STUB1-VCP-UBXN2A complex. Interacts with HSPA9/MOT-2 (via SBD domain); the interaction inhibits HSPA9/MOT-2 interaction with and degradation of p53, thereby promotes p53 translocation to the nucleus. Interacts with RICTOR. Post-translationally, ubiquitinated. Expressed in the prefrontal cortex (at protein level). Expressed in the habenula and hippocampus (at protein level). Expressed in peripheral ganglia.

It is found in the golgi apparatus. The protein resides in the endoplasmic reticulum. Its subcellular location is the perikaryon. The protein localises to the cell projection. It localises to the dendrite. It is found in the nucleus. The protein resides in the cytoplasm. Functionally, acts to repress the ubiquitination and subsequent endoplasmic reticulum-associated degradation of CHRNA3 by the STUB1-VCP-UBXN2A complex in cortical neurons. Also acts to promote the translocation of CHRNA3 to the plasma membrane and subsequently increases plasma membrane acetylcholine-gated ion-channel activation. Plays a role in the inhibition of STUB1-mediated TP53 degradation, via its interaction with HSPA9 which acts to inhibit TP53 binding to HSPA9. Positively mediates the ubiquitination and proteosomal degradation of RICTOR, may thereby act as a negative regulator of the mTORC2 pathway. In Mus musculus (Mouse), this protein is UBX domain-containing protein 2A.